The chain runs to 351 residues: Beta-hexosaminidase (351 aa).

Substrate-binding positions include D62, R70, R134, and K164–H165. Catalysis depends on H177, which acts as the Proton donor/acceptor. The active-site Nucleophile is D249.

Belongs to the glycosyl hydrolase 3 family. NagZ subfamily. In terms of assembly, monomer.

It localises to the cytoplasm. The enzyme catalyses Hydrolysis of terminal non-reducing N-acetyl-D-hexosamine residues in N-acetyl-beta-D-hexosaminides.. Its pathway is cell wall biogenesis; peptidoglycan recycling. Its function is as follows. Plays a role in peptidoglycan recycling by cleaving the terminal beta-1,4-linked N-acetylglucosamine (GlcNAc) from peptide-linked peptidoglycan fragments, giving rise to free GlcNAc, anhydro-N-acetylmuramic acid and anhydro-N-acetylmuramic acid-linked peptides. This Pasteurella multocida (strain Pm70) protein is Beta-hexosaminidase.